The primary structure comprises 279 residues: Putative cysteine-rich repeat secretory protein 22 (279 aa).

The first 31 residues, M1–S31, serve as a signal peptide directing secretion. 2 Gnk2-homologous domains span residues Y44–S146 and Y152–F276.

It belongs to the cysteine-rich repeat secretory protein family.

The protein resides in the secreted. This Arabidopsis thaliana (Mouse-ear cress) protein is Putative cysteine-rich repeat secretory protein 22 (CRRSP22).